The primary structure comprises 503 residues: Protein DETOXIFICATION 36 (503 aa).

The next 12 membrane-spanning stretches (helical) occupy residues 54 to 74 (LFHL…MSML), 87 to 107 (LAAA…LMLG), 137 to 157 (IVLV…KPLL), 166 to 186 (VASV…AYAV), 203 to 223 (SAYI…LSVF), 225 to 245 (FGWG…IIVL), 271 to 293 (GLWD…SWYS), 313 to 333 (LAIC…FNAA), 355 to 375 (AVTT…ILSW), 399 to 419 (FLAI…VAVG), 427 to 447 (AYVN…VLGF), and 456 to 476 (IWTG…IVTF).

It belongs to the multi antimicrobial extrusion (MATE) (TC 2.A.66.1) family.

It is found in the membrane. This chain is Protein DETOXIFICATION 36, found in Arabidopsis thaliana (Mouse-ear cress).